The primary structure comprises 210 residues: Ribosomal RNA large subunit methyltransferase E (210 aa).

S-adenosyl-L-methionine-binding residues include G64, W66, D84, N100, and D125. The active-site Proton acceptor is the K165.

This sequence belongs to the class I-like SAM-binding methyltransferase superfamily. RNA methyltransferase RlmE family.

The protein localises to the cytoplasm. It carries out the reaction uridine(2552) in 23S rRNA + S-adenosyl-L-methionine = 2'-O-methyluridine(2552) in 23S rRNA + S-adenosyl-L-homocysteine + H(+). In terms of biological role, specifically methylates the uridine in position 2552 of 23S rRNA at the 2'-O position of the ribose in the fully assembled 50S ribosomal subunit. In Buchnera aphidicola subsp. Baizongia pistaciae (strain Bp), this protein is Ribosomal RNA large subunit methyltransferase E.